Consider the following 387-residue polypeptide: Protochlorophyllide reductase A, chloroplastic (387 aa).

The N-terminal 35 residues, 1 to 35, are a transit peptide targeting the chloroplast; sequence MALQVQAALLPSALSVPKKGNLSAVVKEPGFLSVS.

It belongs to the short-chain dehydrogenases/reductases (SDR) family. POR subfamily.

It localises to the plastid. The protein localises to the chloroplast. The enzyme catalyses chlorophyllide a + NADP(+) = protochlorophyllide a + NADPH + H(+). It participates in porphyrin-containing compound metabolism; chlorophyll biosynthesis. In terms of biological role, phototransformation of protochlorophyllide (Pchlide) to chlorophyllide (Chlide). In Oryza sativa subsp. japonica (Rice), this protein is Protochlorophyllide reductase A, chloroplastic (PORA).